We begin with the raw amino-acid sequence, 551 residues long: Interleukin-2 receptor subunit beta (551 aa).

The signal sequence occupies residues 1–26 (MAAPALSWRLPLLILLLPLATSWASA). Topologically, residues 27–240 (AVNGTSQFTC…TKPAALGKDT (214 aa)) are extracellular. N-linked (GlcNAc...) asparagine glycosylation is found at Asn-29, Asn-43, and Asn-71. Intrachain disulfides connect Cys-36–Cys-46, Cys-59–Cys-110, and Cys-74–Cys-86. In terms of domain architecture, Fibronectin type-III spans 134–234 (APISLQVVHV…QPLAFRTKPA (101 aa)). N-linked (GlcNAc...) asparagine glycosylation occurs at Asn-149. Residues 220–224 (WSPWS) carry the WSXWS motif motif. Residues 241–265 (IPWLGHLLVGLSGAFGFIILVYLLI) traverse the membrane as a helical segment. The Cytoplasmic segment spans residues 266–551 (NCRNTGPWLK…LQGQDPTHLV (286 aa)). The Box 1 motif signature appears at 278–286 (LKCNTPDPS). Disordered regions lie at residues 389–416 (EEDPDEGVAGAPTGSSPQPLQPLSGEDD) and 432–486 (PSLL…VDFQ).

This sequence belongs to the type I cytokine receptor family. Type 4 subfamily. In terms of assembly, non-covalent dimer of an alpha and a beta subunit. IL2R exists in 3 different forms: a high affinity dimer, an intermediate affinity monomer (beta subunit), and a low affinity monomer (alpha subunit). The high and intermediate affinity forms also associate with a gamma subunit. Interacts with SHB upon interleukin stimulation. (Microbial infection) Interacts with HTLV-1 accessory protein p12I.

The protein resides in the cell membrane. Functionally, receptor for interleukin-2. This beta subunit is involved in receptor mediated endocytosis and transduces the mitogenic signals of IL2. Probably in association with IL15RA, involved in the stimulation of neutrophil phagocytosis by IL15. The sequence is that of Interleukin-2 receptor subunit beta from Homo sapiens (Human).